The primary structure comprises 398 residues: Putative L-rhamnonate dehydratase (398 aa).

2 residues coordinate substrate: histidine 29 and arginine 55. Aspartate 221, glutamate 247, and glutamate 274 together coordinate Mg(2+). Histidine 324 serves as the catalytic Proton acceptor. Substrate is bound at residue glutamate 344.

The protein belongs to the mandelate racemase/muconate lactonizing enzyme family. RhamD subfamily. Mg(2+) serves as cofactor.

The enzyme catalyses L-rhamnonate = 2-dehydro-3-deoxy-L-rhamnonate + H2O. Functionally, catalyzes the dehydration of L-rhamnonate to 2-keto-3-deoxy-L-rhamnonate (KDR). The polypeptide is Putative L-rhamnonate dehydratase (Caldivirga maquilingensis (strain ATCC 700844 / DSM 13496 / JCM 10307 / IC-167)).